Reading from the N-terminus, the 164-residue chain is Thioredoxin domain-containing protein R443 (164 aa).

Residues 8–28 (HIVLIVLAIILILWIISLLLC) form a helical membrane-spanning segment. The Thioredoxin domain occupies 36–163 (YQVPIIQPMQ…LTQFIRSNMN (128 aa)). Residues Cys-84 and Cys-87 are joined by a disulfide bond.

The protein belongs to the thioredoxin family.

Its subcellular location is the host membrane. It is found in the virion. This Acanthamoeba polyphaga mimivirus (APMV) protein is Thioredoxin domain-containing protein R443.